Consider the following 541-residue polypeptide: Glucose-6-phosphate isomerase (541 aa).

The active-site Proton donor is Glu-346. Active-site residues include His-377 and Lys-506.

This sequence belongs to the GPI family.

The protein resides in the cytoplasm. The enzyme catalyses alpha-D-glucose 6-phosphate = beta-D-fructose 6-phosphate. It functions in the pathway carbohydrate biosynthesis; gluconeogenesis. The protein operates within carbohydrate degradation; glycolysis; D-glyceraldehyde 3-phosphate and glycerone phosphate from D-glucose: step 2/4. Functionally, catalyzes the reversible isomerization of glucose-6-phosphate to fructose-6-phosphate. This is Glucose-6-phosphate isomerase from Rhizobium etli (strain CIAT 652).